A 1052-amino-acid polypeptide reads, in one-letter code: MKLINIWLLLLVVLLCGKKHLGDRLGKKAFEKASCPSCSHLTLKVEFSSTVVEYEYIVAFNGYFTAKARNSFISSALKSSEVDNWRIIPRNNPSSDYPSDFEVIQIKEKQKAGLLTLEDHPNIKRVTPQRKVFRSLKFAESDPIVPCNETRWSQKWQSSRPLRRASLSLGSGFWHATGRHSSRRLLRAIPRQVAQTLQADVLWQMGYTGANVRVAVFDTGLSEKHPHFKNVKERTNWTNERTLDDGLGHGTFVAGVIASMRECQGFAPDAELHIFRVFTNNQVSYTSWFLDAFNYAILKKIDVLNLSIGGPDFMDHPFVDKVWELTANNVIMVSAIGNDGPLYGTLNNPADQMDVIGVGGIDFEDNIARFSSRGMTTWELPGGYGRVKPDIVTYGAGVRGSGVKGGCRALSGTSVASPVVAGAVTLLVSTVQKRELVNPASVKQALIASARRLPGVNMFEQGHGKLDLLRAYQILSSYKPQASLSPSYIDLTECPYMWPYCSQPIYYGGMPTIVNVTILNGMGVTGRIVDKPEWRPYLPQNGDNIEVAFSYSSVLWPWSGYLAISISVTKKAASWEGIAQGHIMITVASPAETEAKNGAEHTSTVKLPIKVKIIPTPPRSKRVLWDQYHNLRYPPGYFPRDNLRMKNDPLDWNGDHVHTNFRDMYQHLRSMGYFVEVLGAPFTCFDATQYGTLLMVDSEEEYFPEEIAKLRRDVDNGLSLVIFSDWYNTSVMRKVKFYDENTRQWWMPDTGGANIPALNELLSVWNMGFSDGLYEGEFALANHDMYYASGCSIAKFPEDGVVITQTFKDQGLEVLKQETAVVENVPILGLYQIPAEGGGRIVLYGDSNCLDDSHRQKDCFWLLDALLQYTSYGVTPPSLSHSGNRQRPPSGAGLAPPERMEGNHLHRYSKVLEAHLGDPKPRPLPACPHLSWAKPQPLNETAPSNLWKHQKLLSIDLDKVVLPNFRSNRPQVRPLSPGESGAWDIPGGIMPGRYNQEVGQTIPVFAFLGAMVALAFFVVQISKAKSRPKRRRPRAKRPQLTQQTHPPRTPSV.

The N-terminal stretch at 1–17 (MKLINIWLLLLVVLLCG) is a signal peptide. The propeptide occupies 18–186 (KKHLGDRLGK…TGRHSSRRLL (169 aa)). The N-linked (GlcNAc...) asparagine glycan is linked to N148. S168 is subject to Phosphoserine. The Lumenal segment spans residues 187–999 (RAIPRQVAQT…MPGRYNQEVG (813 aa)). The Peptidase S8 domain maps to 190-472 (PRQVAQTLQA…HGKLDLLRAY (283 aa)). Residue D218 is the Charge relay system of the active site. An N-linked (GlcNAc...) asparagine glycan is attached at N236. Catalysis depends on H249, which acts as the Charge relay system. Residue N305 is glycosylated (N-linked (GlcNAc...) asparagine). S414 serves as the catalytic Charge relay system. Residues N515 and N728 are each glycosylated (N-linked (GlcNAc...) asparagine). The span at 877–887 (PSLSHSGNRQR) shows a compositional bias: polar residues. The disordered stretch occupies residues 877–900 (PSLSHSGNRQRPPSGAGLAPPERM). A glycan (N-linked (GlcNAc...) asparagine) is linked at N939. A helical membrane pass occupies residues 1000–1022 (QTIPVFAFLGAMVALAFFVVQIS). At 1023-1052 (KAKSRPKRRRPRAKRPQLTQQTHPPRTPSV) the chain is on the cytoplasmic side. The span at 1025–1037 (KSRPKRRRPRAKR) shows a compositional bias: basic residues. The tract at residues 1025 to 1052 (KSRPKRRRPRAKRPQLTQQTHPPRTPSV) is disordered.

The protein belongs to the peptidase S8 family. The cofactor is Ca(2+). In terms of processing, the 148 kDa zymogen is processed progressively into two membrane-bound 120 and 106 kDa forms in the endoplasmic reticulum, and late into a secreted 98 kDa form. The propeptide is autocatalytically removed through an intramolecular cleavage after Leu-186. Further cleavage generates 14, 10, and 8 kDa intermediates.

The protein resides in the endoplasmic reticulum membrane. The protein localises to the golgi apparatus membrane. It catalyses the reaction Processes precursors containing basic and hydrophobic/aliphatic residues at P4 and P2, respectively, with a relatively relaxed acceptance of amino acids at P1 and P3.. With respect to regulation, inhibited by divalent copper and zinc ions, but not by nickel or cobalt. Inhibited by its prosegment, but not smaller fragments. Inhibited by 4-(2-aminoethyl)benzenesulfonyl fluoride (AEBSF), a serine protease inhibitor. In terms of biological role, serine protease that cleaves after hydrophobic or small residues, provided that Arg or Lys is in position P4: known substrates include SREBF1/SREBP1, SREBF2/SREBP2, BDNF, GNPTAB, ATF6, ATF6B and FAM20C. Cleaves substrates after Arg-Ser-Val-Leu (SREBP2), Arg-His-Leu-Leu (ATF6), Arg-Gly-Leu-Thr (BDNF) and its own propeptide after Arg-Arg-Leu-Leu. Catalyzes the first step in the proteolytic activation of the sterol regulatory element-binding proteins (SREBPs) SREBF1/SREBP1 and SREBF2/SREBP2. Also mediates the first step in the proteolytic activation of the cyclic AMP-dependent transcription factor ATF-6 (ATF6 and ATF6B). Mediates the protein cleavage of GNPTAB into subunit alpha and beta, thereby participating in biogenesis of lysosomes. Cleaves the propeptide from FAM20C which is required for FAM20C secretion from the Golgi apparatus membrane and for enhancement of FAM20C kinase activity, promoting osteoblast differentiation and biomineralization. Involved in the regulation of M6P-dependent Golgi-to-lysosome trafficking of lysosomal enzymes. It is required for the activation of CREB3L2/BBF2H7, a transcriptional activator of MIA3/TANGO and other genes controlling mega vesicle formation. Therefore, it plays a key role in the regulation of mega vesicle-mediated collagen trafficking. In astrocytes and osteoblasts, upon DNA damage and ER stress, mediates the first step of the regulated intramembrane proteolytic activation of the transcription factor CREB3L1, leading to the inhibition of cell-cycle progression. This chain is Membrane-bound transcription factor site-1 protease, found in Cricetulus griseus (Chinese hamster).